The following is a 365-amino-acid chain: Putative DNA-directed RNA polymerase subunit alpha-like 3 (365 aa).

This sequence belongs to the RNA polymerase alpha chain family. In terms of assembly, in plastids the minimal PEP RNA polymerase catalytic core is composed of four subunits: alpha, beta, beta', and beta''. When a (nuclear-encoded) sigma factor is associated with the core the holoenzyme is formed, which can initiate transcription.

Its subcellular location is the plastid. It is found in the chloroplast. It catalyses the reaction RNA(n) + a ribonucleoside 5'-triphosphate = RNA(n+1) + diphosphate. Its function is as follows. DNA-dependent RNA polymerase catalyzes the transcription of DNA into RNA using the four ribonucleoside triphosphates as substrates. In Pelargonium hortorum (Common geranium), this protein is Putative DNA-directed RNA polymerase subunit alpha-like 3 (rpoAL3-A).